Reading from the N-terminus, the 654-residue chain is tRNA 5-methylaminomethyl-2-thiouridine biosynthesis bifunctional protein MnmC (654 aa).

Residues 1-236 are tRNA (mnm(5)s(2)U34)-methyltransferase; sequence MPTLLQHAQI…KWEVMSGAYV (236 aa). Residues 262-654 are FAD-dependent cmnm(5)s(2)U34 oxidoreductase; the sequence is IGAGLAGSSS…FGLRRLIRGK (393 aa).

The protein in the N-terminal section; belongs to the methyltransferase superfamily. tRNA (mnm(5)s(2)U34)-methyltransferase family. It in the C-terminal section; belongs to the DAO family. FAD serves as cofactor.

It is found in the cytoplasm. It carries out the reaction 5-aminomethyl-2-thiouridine(34) in tRNA + S-adenosyl-L-methionine = 5-methylaminomethyl-2-thiouridine(34) in tRNA + S-adenosyl-L-homocysteine + H(+). In terms of biological role, catalyzes the last two steps in the biosynthesis of 5-methylaminomethyl-2-thiouridine (mnm(5)s(2)U) at the wobble position (U34) in tRNA. Catalyzes the FAD-dependent demodification of cmnm(5)s(2)U34 to nm(5)s(2)U34, followed by the transfer of a methyl group from S-adenosyl-L-methionine to nm(5)s(2)U34, to form mnm(5)s(2)U34. The chain is tRNA 5-methylaminomethyl-2-thiouridine biosynthesis bifunctional protein MnmC from Pseudomonas putida (strain ATCC 47054 / DSM 6125 / CFBP 8728 / NCIMB 11950 / KT2440).